We begin with the raw amino-acid sequence, 361 residues long: Histidinol-phosphate aminotransferase (361 aa).

At K218 the chain carries N6-(pyridoxal phosphate)lysine.

The protein belongs to the class-II pyridoxal-phosphate-dependent aminotransferase family. Histidinol-phosphate aminotransferase subfamily. Homodimer. Requires pyridoxal 5'-phosphate as cofactor.

It carries out the reaction L-histidinol phosphate + 2-oxoglutarate = 3-(imidazol-4-yl)-2-oxopropyl phosphate + L-glutamate. The protein operates within amino-acid biosynthesis; L-histidine biosynthesis; L-histidine from 5-phospho-alpha-D-ribose 1-diphosphate: step 7/9. The protein is Histidinol-phosphate aminotransferase of Ruegeria pomeroyi (strain ATCC 700808 / DSM 15171 / DSS-3) (Silicibacter pomeroyi).